A 301-amino-acid chain; its full sequence is Aquaporin NIP2-3 (301 aa).

A run of 2 helical transmembrane segments spans residues 57-77 (VISE…AASI) and 91-111 (SVAG…ISGA). The NPA 1 motif lies at 114–116 (NPA). 3 helical membrane passes run 132–154 (VPFY…KAVL), 172–192 (ALAI…AVAT), and 200–220 (LAGL…GPVS). The NPA 2 motif lies at 225 to 227 (NPA). Residues 238–258 (VFTGLWIYFLGPVVGTLSGAW) form a helical membrane-spanning segment.

The protein belongs to the MIP/aquaporin (TC 1.A.8) family. NIP (TC 1.A.8.12) subfamily.

Its subcellular location is the membrane. Functionally, aquaporins facilitate the transport of water and small neutral solutes across cell membranes. The sequence is that of Aquaporin NIP2-3 (NIP2-3) from Zea mays (Maize).